The following is a 206-amino-acid chain: Small ribosomal subunit protein uS4A (206 aa).

Positions 98–163 (MRLDNVVYRL…SERFKMFAEN (66 aa)) constitute an S4 RNA-binding domain.

It belongs to the universal ribosomal protein uS4 family. In terms of assembly, part of the 30S ribosomal subunit. Contacts protein S5. The interaction surface between S4 and S5 is involved in control of translational fidelity.

One of the primary rRNA binding proteins, it binds directly to 16S rRNA where it nucleates assembly of the body of the 30S subunit. Functionally, with S5 and S12 plays an important role in translational accuracy. In Clostridium perfringens (strain SM101 / Type A), this protein is Small ribosomal subunit protein uS4A.